We begin with the raw amino-acid sequence, 232 residues long: Small ribosomal subunit protein uS3 (232 aa).

The region spanning 39–107 (VRQYLTKALK…PAQINIAEVR (69 aa)) is the KH type-2 domain.

The protein belongs to the universal ribosomal protein uS3 family. Part of the 30S ribosomal subunit. Forms a tight complex with proteins S10 and S14.

In terms of biological role, binds the lower part of the 30S subunit head. Binds mRNA in the 70S ribosome, positioning it for translation. In Pseudoalteromonas atlantica (strain T6c / ATCC BAA-1087), this protein is Small ribosomal subunit protein uS3.